Reading from the N-terminus, the 338-residue chain is Probable tRNA pseudouridine synthase B (338 aa).

The Nucleophile role is filled by Asp78. A PUA domain is found at 245–320; it reads LPKIILRDSA…IAASPIRVLM (76 aa).

This sequence belongs to the pseudouridine synthase TruB family. Type 2 subfamily.

It catalyses the reaction uridine(55) in tRNA = pseudouridine(55) in tRNA. Could be responsible for synthesis of pseudouridine from uracil-55 in the psi GC loop of transfer RNAs. This Methanosarcina acetivorans (strain ATCC 35395 / DSM 2834 / JCM 12185 / C2A) protein is Probable tRNA pseudouridine synthase B.